The following is a 251-amino-acid chain: POU class 2 homeobox associating factor 3 (251 aa).

An OCA domain is found at 5 to 27 (PKVYQGVRVKITVKELLQQRRAH). The disordered stretch occupies residues 24-45 (RRAHQAASGGTRSGGSSVHLSD). Over residues 31–40 (SGGTRSGGSS) the composition is skewed to low complexity.

This sequence belongs to the POU2AF family. In terms of assembly, interacts with POU2F3 in a DNA-dependent manner; this interaction increases POU2F3 transactivation activity. As to expression, expressed in many cell types of epithelial, mesenchymal and hematopoietic origins. Expressed in tufs cells.

Its subcellular location is the cytoplasm. The protein localises to the nucleus. In terms of biological role, transcriptional coactivator that specifically associates with POU2F3. This complex drives the development of tuft cells, a rare a rare chemosensory cells that coordinate immune and neural functions within mucosal epithelial tissues. This chain is POU class 2 homeobox associating factor 3, found in Homo sapiens (Human).